Consider the following 70-residue polypeptide: Large ribosomal subunit protein uL29 (70 aa).

This sequence belongs to the universal ribosomal protein uL29 family.

The chain is Large ribosomal subunit protein uL29 from Rickettsia bellii (strain OSU 85-389).